Reading from the N-terminus, the 197-residue chain is Large ribosomal subunit protein bL25 (197 aa).

The protein belongs to the bacterial ribosomal protein bL25 family. CTC subfamily. Part of the 50S ribosomal subunit; part of the 5S rRNA/L5/L18/L25 subcomplex. Contacts the 5S rRNA. Binds to the 5S rRNA independently of L5 and L18.

In terms of biological role, this is one of the proteins that binds to the 5S RNA in the ribosome where it forms part of the central protuberance. In Citrifermentans bemidjiense (strain ATCC BAA-1014 / DSM 16622 / JCM 12645 / Bem) (Geobacter bemidjiensis), this protein is Large ribosomal subunit protein bL25.